The sequence spans 153 residues: Ribosome maturation factor RimP (153 aa).

The protein belongs to the RimP family.

The protein resides in the cytoplasm. In terms of biological role, required for maturation of 30S ribosomal subunits. The protein is Ribosome maturation factor RimP of Nostoc punctiforme (strain ATCC 29133 / PCC 73102).